The chain runs to 591 residues: Potassium channel KAT4 (591 aa).

Topologically, residues 1–32 are cytoplasmic; sequence MAARSELLRPAFGEASPSLGRFVINPHSCSYR. A helical membrane pass occupies residues 33–53; it reads WWHMFLIMLVLYSAWASPFEL. Topologically, residues 54 to 63 are extracellular; it reads SMEKAASIAL. The helical transmembrane segment at 64-84 threads the bilayer; sequence VVTDLVVDVFFAIDIALSFFV. At 85 to 109 the chain is on the cytoplasmic side; sequence AYRDTSTGLLITDRRKITMRYLKRP. A helical membrane pass occupies residues 110–130; that stretch reads CFALDVASTIPLQIIYQLVTG. At 131-137 the chain is on the extracellular side; that stretch reads KRQGLWG. The chain crosses the membrane as a helical; Voltage-sensor span at residues 138–158; it reads LLNLLRLWRLRRVSKLFARVE. The Cytoplasmic segment spans residues 159–172; it reads KDIRFNYLWTRLIK. Residues 173-193 form a helical membrane-spanning segment; sequence LLCVTLFALHFAACIYLWMAF. At 194–220 the chain is on the extracellular side; it reads NYKIKELTWIGSQIHSFEDRSVWFCYT. Positions 221–240 form an intramembrane region, pore-forming; that stretch reads CAVYWSITTLATVGYGDLHA. Topologically, residues 241-246 are extracellular; it reads TNIGEM. The chain crosses the membrane as a helical span at residues 247–267; sequence LFSIAFMLFNMGLTSYIIGNI. Over 268–591 the chain is Cytoplasmic; that stretch reads TNLVVRETSN…IRDGDHLLFS (324 aa). Residue 349 to 469 coordinates a nucleoside 3',5'-cyclic phosphate; sequence LFQGVSDSLI…YIVFSNFIQY (121 aa). Residues 521–591 enclose the KHA domain; the sequence is RVVIHEQLPN…IRDGDHLLFS (71 aa).

The protein belongs to the potassium channel family. Plant (TC 1.A.1.4) subfamily.

Its subcellular location is the membrane. In terms of biological role, probable inward-rectifying potassium channel. Assuming opened or closed conformations in response to the voltage difference across the membrane, the channel is activated by hyperpolarization. The protein is Potassium channel KAT4 of Oryza sativa subsp. japonica (Rice).